The sequence spans 381 residues: NF-kappa-B inhibitor-like protein 1 (381 aa).

The tract at residues 1-34 (MSNPSPQAPEEEASTSVCRPQSCSMASASRRHRR) is disordered. A compositionally biased stretch (polar residues) spans 14-27 (STSVCRPQSCSMAS). ANK repeat units follow at residues 64–93 (AGQPPPLHRACARHDAPALCLLLRLGADPA) and 97–134 (RHGDTALHAAARQGPDAYTDFFLPLLSRCPSAMGIKNK). 2 disordered regions span residues 132–167 (KNKDGETPGQILGWGPPWDSAEEEEDEEVSKEREWR) and 186–298 (EDDA…WRFG). The residue at position 151 (Ser-151) is a Phosphoserine. Residues 151–160 (SAEEEEDEEV) are compositionally biased toward acidic residues. Composition is skewed to basic and acidic residues over residues 205 to 218 (RLAREHAQKQRQQL) and 237 to 290 (RQHE…RGAE).

As to quaternary structure, interacts with CACTIN (via N-terminal domain); the interaction occurs in a pro-inflammatory-independent manner. As to expression, high expression found in heart muscle, liver, kidney and skin. Not detected in spleen, lung and brain.

It localises to the nucleus. Its function is as follows. Involved in the regulation of innate immune response. Acts as negative regulator of Toll-like receptor and interferon-regulatory factor (IRF) signaling pathways. Contributes to the negative regulation of transcriptional activation of NF-kappa-B target genes in response to endogenous pro-inflammatory stimuli. This is NF-kappa-B inhibitor-like protein 1 (Nfkbil1) from Mus musculus (Mouse).